Reading from the N-terminus, the 102-residue chain is RNA-binding protein Hfq (102 aa).

One can recognise a Sm domain in the interval 9–68 (DPFLNALRRERVPVSIYLVNGIKLQGQIESFDQFVILLKNTVSQMVYKHAISTVVPSRPV). Positions 63-102 (VPSRPVSHHSNNAGGSTSSNYHHGSSAQNTSAQQDSEENE) are disordered. Polar residues predominate over residues 70–96 (HHSNNAGGSTSSNYHHGSSAQNTSAQQ).

Belongs to the Hfq family. Homohexamer.

In terms of biological role, RNA chaperone that binds small regulatory RNA (sRNAs) and mRNAs to facilitate mRNA translational regulation in response to envelope stress, environmental stress and changes in metabolite concentrations. Also binds with high specificity to tRNAs. This chain is RNA-binding protein Hfq, found in Escherichia coli O17:K52:H18 (strain UMN026 / ExPEC).